Reading from the N-terminus, the 143-residue chain is Large ribosomal subunit protein uL15 (143 aa).

Residues 1–59 are disordered; sequence MELNGIKPADGAKHYKRRVGRGIGSGIGKTAGRGHKGQKSRAGGYHKVGFEGGQMPMQR. Gly residues predominate over residues 21–31; the sequence is RGIGSGIGKTA.

The protein belongs to the universal ribosomal protein uL15 family. In terms of assembly, part of the 50S ribosomal subunit.

In terms of biological role, binds to the 23S rRNA. The protein is Large ribosomal subunit protein uL15 of Albidiferax ferrireducens (strain ATCC BAA-621 / DSM 15236 / T118) (Rhodoferax ferrireducens).